The sequence spans 249 residues: Ubiquinone biosynthesis O-methyltransferase (249 aa).

S-adenosyl-L-methionine-binding residues include Arg41, Gly72, Asp93, and Met136.

Belongs to the methyltransferase superfamily. UbiG/COQ3 family.

The catalysed reaction is a 3-demethylubiquinol + S-adenosyl-L-methionine = a ubiquinol + S-adenosyl-L-homocysteine + H(+). It catalyses the reaction a 3-(all-trans-polyprenyl)benzene-1,2-diol + S-adenosyl-L-methionine = a 2-methoxy-6-(all-trans-polyprenyl)phenol + S-adenosyl-L-homocysteine + H(+). It functions in the pathway cofactor biosynthesis; ubiquinone biosynthesis. O-methyltransferase that catalyzes the 2 O-methylation steps in the ubiquinone biosynthetic pathway. The protein is Ubiquinone biosynthesis O-methyltransferase of Methylobacterium sp. (strain 4-46).